The primary structure comprises 123 residues: MPDASLGSLGITWCFLESPLEVSSGRFGLARLLGSQDHGDDPAERGRTATDAWGPSRWGQSPGNGGGYCDASPPSALAPGDRAWALPASPSSGAPASQHCCLEKAGTRTKASPVWGRDGNTWN.

A disordered region spans residues 35-100 (SQDHGDDPAE…SSGAPASQHC (66 aa)). Residues 37–48 (DHGDDPAERGRT) are compositionally biased toward basic and acidic residues. A compositionally biased stretch (low complexity) spans 85–97 (ALPASPSSGAPAS).

This is an uncharacterized protein from Homo sapiens (Human).